The chain runs to 535 residues: Beta-amylase 1, chloroplastic (535 aa).

A chloroplast-targeting transit peptide spans 1–36; sequence MALNLAQSAAAAACFATAGDARRAASVVAMPSSSSS. Residues D115, H155, and D163 each coordinate substrate. The active-site Proton donor is the E247. 3 residues coordinate substrate: K361, H366, and T408. E446 functions as the Proton acceptor in the catalytic mechanism. Substrate is bound by residues 447–448 and R480; that span reads NA.

The protein belongs to the glycosyl hydrolase 14 family.

Its subcellular location is the plastid. The protein resides in the chloroplast. It catalyses the reaction Hydrolysis of (1-&gt;4)-alpha-D-glucosidic linkages in polysaccharides so as to remove successive maltose units from the non-reducing ends of the chains.. Functionally, possesses beta-amylase activity in vitro. May be involved in cold resistance by mediating the accumulation of maltose upon freezing stress, thus contributing to the protection of membranes. The sequence is that of Beta-amylase 1, chloroplastic from Oryza sativa subsp. japonica (Rice).